The sequence spans 156 residues: ATP synthase subunit b (156 aa).

Residues 7-29 traverse the membrane as a helical segment; the sequence is LLGQAISFLLFVWFCMKFVWPPL.

Belongs to the ATPase B chain family. As to quaternary structure, F-type ATPases have 2 components, F(1) - the catalytic core - and F(0) - the membrane proton channel. F(1) has five subunits: alpha(3), beta(3), gamma(1), delta(1), epsilon(1). F(0) has three main subunits: a(1), b(2) and c(10-14). The alpha and beta chains form an alternating ring which encloses part of the gamma chain. F(1) is attached to F(0) by a central stalk formed by the gamma and epsilon chains, while a peripheral stalk is formed by the delta and b chains.

The protein resides in the cell inner membrane. F(1)F(0) ATP synthase produces ATP from ADP in the presence of a proton or sodium gradient. F-type ATPases consist of two structural domains, F(1) containing the extramembraneous catalytic core and F(0) containing the membrane proton channel, linked together by a central stalk and a peripheral stalk. During catalysis, ATP synthesis in the catalytic domain of F(1) is coupled via a rotary mechanism of the central stalk subunits to proton translocation. Its function is as follows. Component of the F(0) channel, it forms part of the peripheral stalk, linking F(1) to F(0). The sequence is that of ATP synthase subunit b from Shewanella halifaxensis (strain HAW-EB4).